We begin with the raw amino-acid sequence, 205 residues long: Recombination protein RecR (205 aa).

The C4-type zinc-finger motif lies at 60–75 (CKVCHNISDTETCQIC). A Toprim domain is found at 83 to 178 (SMVCVVENIR…KLSVLARGVS (96 aa)).

It belongs to the RecR family.

In terms of biological role, may play a role in DNA repair. It seems to be involved in an RecBC-independent recombinational process of DNA repair. It may act with RecF and RecO. The chain is Recombination protein RecR from Bacteroides fragilis (strain ATCC 25285 / DSM 2151 / CCUG 4856 / JCM 11019 / LMG 10263 / NCTC 9343 / Onslow / VPI 2553 / EN-2).